Consider the following 606-residue polypeptide: Polypeptide N-acetylgalactosaminyltransferase 9 (606 aa).

The Cytoplasmic portion of the chain corresponds to 1 to 6 (MAVARK). Residues 7–29 (IRTLLTVNILVFVGIVLFSVYCR) form a helical; Signal-anchor for type II membrane protein membrane-spanning segment. Residues 30–606 (LQGRSQELVR…IRNWIKHARH (577 aa)) are Lumenal-facing. A disordered region spans residues 43-62 (GGCRPRPATPAPGSPLRSGG). 2 disulfides stabilise this stretch: Cys144/Cys375 and Cys366/Cys445. The segment at 153–264 (LPQVSVVFIF…TGWAEPALSR (112 aa)) is catalytic subdomain A. Positions 194 and 225 each coordinate substrate. Mn(2+) is bound by residues Asp248, His250, and His380. The catalytic subdomain B stretch occupies residues 321 to 383 (PIRTPAMIGC…PCSRVAHIER (63 aa)). Residues Arg383 and Tyr388 each contribute to the substrate site. Asn463 is a glycosylation site (N-linked (GlcNAc...) asparagine). The region spanning 467–603 (TYGEVRNSKA…KWMIRNWIKH (137 aa)) is the Ricin B-type lectin domain. 3 disulfides stabilise this stretch: Cys480-Cys496, Cys528-Cys543, and Cys570-Cys590.

The protein belongs to the glycosyltransferase 2 family. GalNAc-T subfamily. Requires Mn(2+) as cofactor.

The protein resides in the golgi apparatus membrane. The catalysed reaction is L-seryl-[protein] + UDP-N-acetyl-alpha-D-galactosamine = a 3-O-[N-acetyl-alpha-D-galactosaminyl]-L-seryl-[protein] + UDP + H(+). It carries out the reaction L-threonyl-[protein] + UDP-N-acetyl-alpha-D-galactosamine = a 3-O-[N-acetyl-alpha-D-galactosaminyl]-L-threonyl-[protein] + UDP + H(+). It participates in protein modification; protein glycosylation. In terms of biological role, catalyzes the initial reaction in O-linked oligosaccharide biosynthesis, the transfer of an N-acetyl-D-galactosamine residue to a serine or threonine residue on the protein receptor. Does not glycosylate apomucin or SDC3. This chain is Polypeptide N-acetylgalactosaminyltransferase 9 (GALNT9), found in Macaca fascicularis (Crab-eating macaque).